The chain runs to 430 residues: Histidine--tRNA ligase (430 aa).

Belongs to the class-II aminoacyl-tRNA synthetase family. Homodimer.

It localises to the cytoplasm. It catalyses the reaction tRNA(His) + L-histidine + ATP = L-histidyl-tRNA(His) + AMP + diphosphate + H(+). The sequence is that of Histidine--tRNA ligase from Acaryochloris marina (strain MBIC 11017).